The primary structure comprises 91 residues: Large ribosomal subunit protein uL23c (91 aa).

The protein belongs to the universal ribosomal protein uL23 family. Part of the 50S ribosomal subunit.

The protein localises to the plastid. The protein resides in the chloroplast. Its function is as follows. Binds to 23S rRNA. The polypeptide is Large ribosomal subunit protein uL23c (rpl23) (Marchantia polymorpha (Common liverwort)).